Reading from the N-terminus, the 293-residue chain is Epimerase family protein SDR39U1 (293 aa).

Residues 31–32, 58–59, E77, R82, and V160 contribute to the NADP(+) site; these read SR and LA.

It belongs to the NAD(P)-dependent epimerase/dehydratase family. SDR39U1 subfamily.

In terms of biological role, putative NADP-dependent oxidoreductase. The sequence is that of Epimerase family protein SDR39U1 (Sdr39u1) from Mus musculus (Mouse).